Here is a 130-residue protein sequence, read N- to C-terminus: Small ribosomal subunit protein uS11c (130 aa).

The protein belongs to the universal ribosomal protein uS11 family. As to quaternary structure, part of the 30S ribosomal subunit.

It localises to the plastid. The protein localises to the chloroplast. The sequence is that of Small ribosomal subunit protein uS11c from Porphyra purpurea (Red seaweed).